Here is a 360-residue protein sequence, read N- to C-terminus: NAD(P)H-quinone oxidoreductase subunit 1, chloroplastic (360 aa).

The next 9 membrane-spanning stretches (helical) occupy residues 27-47 (IWIF…VLVI), 98-118 (FSIG…VIPF), 129-149 (IGIF…LMSG), 165-185 (AAQS…ISLL), 203-223 (FWGW…ISSL), 248-268 (YSGI…LISS), 269-289 (LFVT…ISIL), 297-317 (IFGT…FLFI), and 340-360 (FLLP…LFSL).

The protein belongs to the complex I subunit 1 family. In terms of assembly, NDH is composed of at least 16 different subunits, 5 of which are encoded in the nucleus.

Its subcellular location is the plastid. It localises to the chloroplast thylakoid membrane. The enzyme catalyses a plastoquinone + NADH + (n+1) H(+)(in) = a plastoquinol + NAD(+) + n H(+)(out). The catalysed reaction is a plastoquinone + NADPH + (n+1) H(+)(in) = a plastoquinol + NADP(+) + n H(+)(out). Functionally, NDH shuttles electrons from NAD(P)H:plastoquinone, via FMN and iron-sulfur (Fe-S) centers, to quinones in the photosynthetic chain and possibly in a chloroplast respiratory chain. The immediate electron acceptor for the enzyme in this species is believed to be plastoquinone. Couples the redox reaction to proton translocation, and thus conserves the redox energy in a proton gradient. This is NAD(P)H-quinone oxidoreductase subunit 1, chloroplastic from Olimarabidopsis pumila (Dwarf rocket).